A 267-amino-acid chain; its full sequence is Orotidine 5'-phosphate decarboxylase (267 aa).

Substrate is bound by residues aspartate 37, 59-61 (KTH), 91-100 (DRKFADIGNT), tyrosine 217, and arginine 235. Lysine 93 (proton donor) is an active-site residue.

This sequence belongs to the OMP decarboxylase family.

The catalysed reaction is orotidine 5'-phosphate + H(+) = UMP + CO2. The protein operates within pyrimidine metabolism; UMP biosynthesis via de novo pathway; UMP from orotate: step 2/2. This is Orotidine 5'-phosphate decarboxylase (URA3) from Eremothecium gossypii (strain ATCC 10895 / CBS 109.51 / FGSC 9923 / NRRL Y-1056) (Yeast).